The chain runs to 333 residues: tRNA-dihydrouridine(16) synthase (333 aa).

FMN is bound by residues 19 to 21 (PMQ) and Q80. The active-site Proton donor is C110. FMN is bound by residues K151, 211-213 (NGD), and 235-236 (GR).

The protein belongs to the Dus family. DusC subfamily. FMN serves as cofactor.

It catalyses the reaction 5,6-dihydrouridine(16) in tRNA + NADP(+) = uridine(16) in tRNA + NADPH + H(+). The catalysed reaction is 5,6-dihydrouridine(16) in tRNA + NAD(+) = uridine(16) in tRNA + NADH + H(+). Catalyzes the synthesis of 5,6-dihydrouridine (D), a modified base found in the D-loop of most tRNAs, via the reduction of the C5-C6 double bond in target uridines. Specifically modifies U16 in tRNAs. This is tRNA-dihydrouridine(16) synthase from Neisseria meningitidis serogroup B (strain ATCC BAA-335 / MC58).